A 505-amino-acid chain; its full sequence is Serine/threonine-protein kinase D (505 aa).

A Protein kinase domain is found at 9–271 (YEIVKSLGSG…AMYQALHSLI (263 aa)). ATP contacts are provided by residues 15 to 23 (LGSGGFGDT) and Lys-40. The active-site Proton acceptor is the Asp-136. The SH3b domain maps to 436 to 505 (GASATIGGIP…GWIASQLVNF (70 aa)).

Belongs to the protein kinase superfamily. Ser/Thr protein kinase family.

It carries out the reaction L-seryl-[protein] + ATP = O-phospho-L-seryl-[protein] + ADP + H(+). The catalysed reaction is L-threonyl-[protein] + ATP = O-phospho-L-threonyl-[protein] + ADP + H(+). This is Serine/threonine-protein kinase D (spkD) from Synechocystis sp. (strain ATCC 27184 / PCC 6803 / Kazusa).